We begin with the raw amino-acid sequence, 595 residues long: Grainyhead-like protein 3 homolog (595 aa).

Residues 29 to 92 (DAWSKYLENP…CDQVKRSCSE (64 aa)) are transcription activation. A Grh/CP2 DB domain is found at 221-454 (ANRDFEYTLE…DMETHPVLFI (234 aa)). The tract at residues 484–505 (SSQSFPKGLEAPPSKQQTSEDS) is disordered.

It belongs to the grh/CP2 family. Grainyhead subfamily.

The protein localises to the nucleus. Transcription factor playing important roles in primary neurulation and in the differentiation of stratified epithelia of both ectodermal and endodermal origin. Binds directly to the consensus DNA sequence 5'-AACCGGTT-3' acting as an activator and repressor on distinct target genes. This chain is Grainyhead-like protein 3 homolog (grhl3), found in Xenopus laevis (African clawed frog).